Reading from the N-terminus, the 249-residue chain is Protein TIFY 10B (249 aa).

Residues 113 to 148 (PESQSAPLTIFYGGRVMVFDDFSAEKAKEVIDLANK) form the Tify domain. The Jas signature appears at 204 to 229 (PIARRASLHRFLEKRKDRITSKAPYQ). The Nuclear localization signal signature appears at 206 to 213 (ARRASLHR). Residues 225 to 249 (KAPYQIDGSAEASSKPTNPAWLSSR) are disordered. Residues 235–249 (EASSKPTNPAWLSSR) are compositionally biased toward polar residues.

It belongs to the TIFY/JAZ family. In terms of assembly, homo- and heterodimer. Interacts with COI1, MYC2, MYC3, MYC4, AFPH2/NINJA, TIFY10A/JAZ1, TIFY6B/JAZ3, TIFY11A/JAZ5, TIFY11B/JAZ6, TIFY5A/JAZ8, TIFY7/JAZ9, TIFY9/JAZ10, TIFY3A/JAZ11 and TIFY3B/JAZ12. Interacts with RHD6 and RSL1. (Microbial infection) Interacts with the pathogenic Pseudomonas syringae HopZ1a protein. Post-translationally, (Microbial infection) Acetylated by Pseudomonas syringae HopZ1a. In terms of processing, ubiquitinated. Targeted for degradation by the SCF(COI1) E3 ubiquitin ligase-proteasome pathway during jasmonate signaling. In terms of tissue distribution, expressed in cotyledons, hypocotyls, roots, sepals, petal vascular tissue and stigmas of developing flowers. Expressed in stamen filaments after jasmonic acid treatment.

The protein localises to the nucleus. Repressor of jasmonate responses. Jasmonoyl-isoleucine (JA-Ile) specifically promotes COI1-TIFY10B/JAZ2 interaction. Activated by MYC2, MYC3 and MYC4 transcription factors. Interacts with and suppresses RHD6 and RSL1 transcription factor activities to negatively regulate jasmonate-stimulated root hair development. In Arabidopsis thaliana (Mouse-ear cress), this protein is Protein TIFY 10B.